We begin with the raw amino-acid sequence, 192 residues long: 7-methyl-GTP pyrophosphatase (192 aa).

The active-site Proton acceptor is Asp-69.

Belongs to the Maf family. YceF subfamily. A divalent metal cation is required as a cofactor.

It localises to the cytoplasm. It carries out the reaction N(7)-methyl-GTP + H2O = N(7)-methyl-GMP + diphosphate + H(+). Its function is as follows. Nucleoside triphosphate pyrophosphatase that hydrolyzes 7-methyl-GTP (m(7)GTP). May have a dual role in cell division arrest and in preventing the incorporation of modified nucleotides into cellular nucleic acids. This is 7-methyl-GTP pyrophosphatase from Methylobacillus flagellatus (strain ATCC 51484 / DSM 6875 / VKM B-1610 / KT).